The primary structure comprises 241 residues: 2-C-methyl-D-erythritol 4-phosphate cytidylyltransferase (241 aa).

This sequence belongs to the IspD/TarI cytidylyltransferase family. IspD subfamily.

The catalysed reaction is 2-C-methyl-D-erythritol 4-phosphate + CTP + H(+) = 4-CDP-2-C-methyl-D-erythritol + diphosphate. It participates in isoprenoid biosynthesis; isopentenyl diphosphate biosynthesis via DXP pathway; isopentenyl diphosphate from 1-deoxy-D-xylulose 5-phosphate: step 2/6. Functionally, catalyzes the formation of 4-diphosphocytidyl-2-C-methyl-D-erythritol from CTP and 2-C-methyl-D-erythritol 4-phosphate (MEP). This is 2-C-methyl-D-erythritol 4-phosphate cytidylyltransferase from Baumannia cicadellinicola subsp. Homalodisca coagulata.